Consider the following 535-residue polypeptide: Bifunctional purine biosynthesis protein PurH (535 aa).

Positions 6-151 constitute an MGS-like domain; sequence TRLPIRRALI…KNHKDVAIVV (146 aa).

Belongs to the PurH family.

The enzyme catalyses (6R)-10-formyltetrahydrofolate + 5-amino-1-(5-phospho-beta-D-ribosyl)imidazole-4-carboxamide = 5-formamido-1-(5-phospho-D-ribosyl)imidazole-4-carboxamide + (6S)-5,6,7,8-tetrahydrofolate. The catalysed reaction is IMP + H2O = 5-formamido-1-(5-phospho-D-ribosyl)imidazole-4-carboxamide. It functions in the pathway purine metabolism; IMP biosynthesis via de novo pathway; 5-formamido-1-(5-phospho-D-ribosyl)imidazole-4-carboxamide from 5-amino-1-(5-phospho-D-ribosyl)imidazole-4-carboxamide (10-formyl THF route): step 1/1. It participates in purine metabolism; IMP biosynthesis via de novo pathway; IMP from 5-formamido-1-(5-phospho-D-ribosyl)imidazole-4-carboxamide: step 1/1. In Pseudomonas fluorescens (strain ATCC BAA-477 / NRRL B-23932 / Pf-5), this protein is Bifunctional purine biosynthesis protein PurH.